A 572-amino-acid chain; its full sequence is Urease subunit alpha (572 aa).

In terms of domain architecture, Urease spans 130-572; sequence GGVDTHIHFI…LPMAQRYFLF (443 aa). His135, His137, and Lys218 together coordinate Ni(2+). Position 218 is an N6-carboxylysine (Lys218). His220 is a binding site for substrate. Residues His247 and His273 each coordinate Ni(2+). His321 functions as the Proton donor in the catalytic mechanism. Asp361 contacts Ni(2+).

It belongs to the metallo-dependent hydrolases superfamily. Urease alpha subunit family. As to quaternary structure, heterotrimer of UreA (gamma), UreB (beta) and UreC (alpha) subunits. Three heterotrimers associate to form the active enzyme. Ni cation is required as a cofactor. Post-translationally, carboxylation allows a single lysine to coordinate two nickel ions.

It localises to the cytoplasm. The catalysed reaction is urea + 2 H2O + H(+) = hydrogencarbonate + 2 NH4(+). Its pathway is nitrogen metabolism; urea degradation; CO(2) and NH(3) from urea (urease route): step 1/1. The protein is Urease subunit alpha of Ralstonia nicotianae (strain ATCC BAA-1114 / GMI1000) (Ralstonia solanacearum).